A 422-amino-acid chain; its full sequence is Exodeoxyribonuclease 7 large subunit (422 aa).

The protein belongs to the XseA family. Heterooligomer composed of large and small subunits.

The protein localises to the cytoplasm. The enzyme catalyses Exonucleolytic cleavage in either 5'- to 3'- or 3'- to 5'-direction to yield nucleoside 5'-phosphates.. Its function is as follows. Bidirectionally degrades single-stranded DNA into large acid-insoluble oligonucleotides, which are then degraded further into small acid-soluble oligonucleotides. The sequence is that of Exodeoxyribonuclease 7 large subunit from Leptospira borgpetersenii serovar Hardjo-bovis (strain JB197).